The primary structure comprises 90 residues: Bombyxin B-9 (90 aa).

An N-terminal signal peptide occupies residues 1–20; the sequence is MMKTAVMFILVVVISLTYSS. 3 disulfide bridges follow: Cys30–Cys75, Cys42–Cys88, and Cys74–Cys79. Positions 49–64 are cleaved as a propeptide — c peptide like; the sequence is GGAQYAPYWQETYLRS.

This sequence belongs to the insulin family. Heterodimer of a B chain and an A chain linked by two disulfide bonds.

The protein resides in the secreted. Functionally, brain peptide responsible for activation of prothoracic glands to produce ecdysone in insects. This Bombyx mori (Silk moth) protein is Bombyxin B-9 (BBXB9).